A 215-amino-acid chain; its full sequence is Large ribosomal subunit protein uL3 (215 aa).

A disordered region spans residues 124–164 (KRHGFSRGPMTHGSKNHREPGSTGAGTTPGRIYPGKRMAGR).

This sequence belongs to the universal ribosomal protein uL3 family. As to quaternary structure, part of the 50S ribosomal subunit. Forms a cluster with proteins L14 and L19.

One of the primary rRNA binding proteins, it binds directly near the 3'-end of the 23S rRNA, where it nucleates assembly of the 50S subunit. This chain is Large ribosomal subunit protein uL3, found in Synechococcus sp. (strain RCC307).